A 283-amino-acid polypeptide reads, in one-letter code: Ribosomal RNA small subunit methyltransferase I (283 aa).

The protein belongs to the methyltransferase superfamily. RsmI family.

The protein resides in the cytoplasm. The catalysed reaction is cytidine(1402) in 16S rRNA + S-adenosyl-L-methionine = 2'-O-methylcytidine(1402) in 16S rRNA + S-adenosyl-L-homocysteine + H(+). Functionally, catalyzes the 2'-O-methylation of the ribose of cytidine 1402 (C1402) in 16S rRNA. This is Ribosomal RNA small subunit methyltransferase I from Haemophilus influenzae (strain ATCC 51907 / DSM 11121 / KW20 / Rd).